Consider the following 190-residue polypeptide: Ribosome maturation factor RimM (190 aa).

The PRC barrel domain occupies 95–177 (EDDEFFYTDL…AGLIDSPDDL (83 aa)). A disordered region spans residues 170-190 (LIDSPDDLTGKPPKPPGKTKE). Residues 181 to 190 (PPKPPGKTKE) show a composition bias toward pro residues.

The protein belongs to the RimM family. As to quaternary structure, binds ribosomal protein uS19.

Its subcellular location is the cytoplasm. Functionally, an accessory protein needed during the final step in the assembly of 30S ribosomal subunit, possibly for assembly of the head region. Essential for efficient processing of 16S rRNA. May be needed both before and after RbfA during the maturation of 16S rRNA. It has affinity for free ribosomal 30S subunits but not for 70S ribosomes. In Rhizobium rhizogenes (strain K84 / ATCC BAA-868) (Agrobacterium radiobacter), this protein is Ribosome maturation factor RimM.